A 351-amino-acid polypeptide reads, in one-letter code: Porphobilinogen deaminase (351 aa).

Cys242 is subject to S-(dipyrrolylmethanemethyl)cysteine.

It belongs to the HMBS family. Monomer. Requires dipyrromethane as cofactor.

The catalysed reaction is 4 porphobilinogen + H2O = hydroxymethylbilane + 4 NH4(+). The protein operates within porphyrin-containing compound metabolism; protoporphyrin-IX biosynthesis; coproporphyrinogen-III from 5-aminolevulinate: step 2/4. Functionally, tetrapolymerization of the monopyrrole PBG into the hydroxymethylbilane pre-uroporphyrinogen in several discrete steps. This chain is Porphobilinogen deaminase, found in Rickettsia africae (strain ESF-5).